The sequence spans 252 residues: Ribosomal RNA small subunit methyltransferase J (252 aa).

Residues 101–102 (RD), 117–118 (ER), 153–154 (SS), and D171 contribute to the S-adenosyl-L-methionine site.

The protein belongs to the methyltransferase superfamily. RsmJ family.

It localises to the cytoplasm. It catalyses the reaction guanosine(1516) in 16S rRNA + S-adenosyl-L-methionine = N(2)-methylguanosine(1516) in 16S rRNA + S-adenosyl-L-homocysteine + H(+). In terms of biological role, specifically methylates the guanosine in position 1516 of 16S rRNA. The polypeptide is Ribosomal RNA small subunit methyltransferase J (Citrobacter koseri (strain ATCC BAA-895 / CDC 4225-83 / SGSC4696)).